A 95-amino-acid chain; its full sequence is Co-chaperonin GroES (95 aa).

This sequence belongs to the GroES chaperonin family. As to quaternary structure, heptamer of 7 subunits arranged in a ring. Interacts with the chaperonin GroEL.

The protein localises to the cytoplasm. Together with the chaperonin GroEL, plays an essential role in assisting protein folding. The GroEL-GroES system forms a nano-cage that allows encapsulation of the non-native substrate proteins and provides a physical environment optimized to promote and accelerate protein folding. GroES binds to the apical surface of the GroEL ring, thereby capping the opening of the GroEL channel. This is Co-chaperonin GroES from Streptococcus salivarius.